The sequence spans 205 residues: Molybdenum cofactor guanylyltransferase (205 aa).

Residues L14–G16, K27, D77, and D107 each bind GTP. A Mg(2+)-binding site is contributed by D107.

It belongs to the MobA family. In terms of assembly, monomer. Requires Mg(2+) as cofactor.

The protein localises to the cytoplasm. It carries out the reaction Mo-molybdopterin + GTP + H(+) = Mo-molybdopterin guanine dinucleotide + diphosphate. Its function is as follows. Transfers a GMP moiety from GTP to Mo-molybdopterin (Mo-MPT) cofactor (Moco or molybdenum cofactor) to form Mo-molybdopterin guanine dinucleotide (Mo-MGD) cofactor. The sequence is that of Molybdenum cofactor guanylyltransferase from Burkholderia lata (strain ATCC 17760 / DSM 23089 / LMG 22485 / NCIMB 9086 / R18194 / 383).